Here is an 846-residue protein sequence, read N- to C-terminus: Patched domain-containing protein 4 (846 aa).

10 helical membrane passes run 41-61 (HPVF…LSAL), 230-250 (SILA…TATL), 265-285 (GLLG…IFFI), 293-313 (TLLG…FELL), 336-356 (VMVT…MGAS), 373-393 (VSIL…LVFA), 465-485 (PFVV…CLQI), 660-680 (PVLI…FLVI), 686-706 (FWLI…MTLW), and 718-738 (LIYT…TFVL). Positions 233 to 392 (ARSKVLVSLV…FSFFGSCLVF (160 aa)) constitute an SSD domain. N762 is a glycosylation site (N-linked (GlcNAc...) asparagine). Helical transmembrane passes span 765 to 785 (SFLI…FTLF) and 787 to 807 (CLLL…PVFL).

It belongs to the patched family.

It is found in the membrane. Its function is as follows. Could act as a repressor of canonical hedgehog signaling by antagonizing the effects of SMO, as suggested by down-regulation of hedgehog target genes, including GLI1, PTCH1, and PTCH2 in PTCHD4-expressing cells. This is Patched domain-containing protein 4 (PTCHD4) from Homo sapiens (Human).